The sequence spans 490 residues: Betaine aldehyde dehydrogenase (490 aa).

The K(+) site is built by threonine 26, isoleucine 27, and aspartate 93. Glycine 150–tryptophan 152 contributes to the NAD(+) binding site. The Charge relay system role is filled by lysine 162. Lysine 176–glutamate 179 contributes to the NAD(+) binding site. Valine 180 contacts K(+). Residue glycine 230 to serine 233 coordinates NAD(+). Leucine 246 is a binding site for K(+). The active-site Proton acceptor is the glutamate 252. Residues glycine 254, cysteine 286, and glutamate 387 each coordinate NAD(+). Catalysis depends on cysteine 286, which acts as the Nucleophile. Position 286 is a cysteine sulfenic acid (-SOH) (cysteine 286). K(+) is bound by residues lysine 457 and glycine 460. Residue glutamate 464 is the Charge relay system of the active site.

Belongs to the aldehyde dehydrogenase family. Dimer of dimers. K(+) serves as cofactor.

It catalyses the reaction betaine aldehyde + NAD(+) + H2O = glycine betaine + NADH + 2 H(+). It participates in amine and polyamine biosynthesis; betaine biosynthesis via choline pathway; betaine from betaine aldehyde: step 1/1. Functionally, involved in the biosynthesis of the osmoprotectant glycine betaine. Catalyzes the irreversible oxidation of betaine aldehyde to the corresponding acid. The polypeptide is Betaine aldehyde dehydrogenase (Escherichia coli (strain K12 / DH10B)).